The following is a 368-amino-acid chain: Protein pxr1 (368 aa).

Disordered regions lie at residues 1 to 28 (MGLAAPKNKIKLSHDPNNTRWSGNTDSF) and 161 to 339 (KEKA…PMGI). A compositionally biased stretch (polar residues) spans 15–27 (DPNNTRWSGNTDS). The G-patch domain maps to 25 to 79 (TDSFGHRMMKSQGWTPGEYLGAKDAAHAEFHTEANASHIRVVIKDNTLGLGAKIG). Residues 168–182 (SSEESDSSSDEEEEK) are compositionally biased toward acidic residues. Composition is skewed to basic residues over residues 209 to 226 (SKKSKKEKKEKKEKKSKK), 242 to 254 (KSKKSKKDRKSKS), 271 to 283 (KARKKEKKEKKRK), and 301 to 312 (SSKKSKKDKHKS). Over residues 313-324 (PSTSKTSTKEST) the composition is skewed to low complexity. Positions 325–334 (PIVSESSGRS) are enriched in polar residues.

The protein belongs to the PINX1 family.

Its subcellular location is the nucleus. It localises to the nucleolus. Its function is as follows. Involved in rRNA-processing at A0, A1 and A2 sites and negatively regulates telomerase. The chain is Protein pxr1 (pxr1) from Botryotinia fuckeliana (strain B05.10) (Noble rot fungus).